We begin with the raw amino-acid sequence, 206 residues long: Venom allergen 5 (206 aa).

Cystine bridges form between Cys-4/Cys-16, Cys-8/Cys-104, Cys-28/Cys-96, and Cys-172/Cys-189. The 144-residue stretch at 48-191 (EEHNRFRQKV…MKIHYLICNY (144 aa)) folds into the SCP domain.

This sequence belongs to the CRISP family. Venom allergen 5-like subfamily. Expressed by the venom gland.

Its subcellular location is the secreted. This is Venom allergen 5 from Polistes gallicus (Paper wasp).